We begin with the raw amino-acid sequence, 261 residues long: Short-chain dehydrogenase/reductase ARMGADRAFT_1018421 (261 aa).

Residues I21, D68, N95, K128, Y161, K165, V194, and T196 each coordinate NADP(+). The Proton acceptor role is filled by Y161. The Lowers pKa of active site Tyr role is filled by K165.

The protein belongs to the short-chain dehydrogenases/reductases (SDR) family.

Its pathway is secondary metabolite biosynthesis. In terms of biological role, short-chain dehydrogenase/reductase, part of the gene cluster that mediates the biosynthesis of melleolides, a range of antifungal and phytotoxic polyketide derivatives composed of an orsellinic acid (OA) moiety esterified to various sesquiterpene alcohols. The first step in melleolides biosynthesis is performed by the delta(6)-protoilludene synthase PRO1 which catalyzes the cyclization of farnesyl diphosphate to protoilludene. The orsellinic acid synthase armB produces OA by condensing acetyl-CoA with 3 malonyl-CoA units in a three-round chain elongation reaction folowed by a C2-C7 ring closure. ArmB further catalyzes the trans-esterification of OA to the various sesquiterpene alcohols resulting from the hydroxylation of protoilludene. The melleolides cluster also includes 5 cytochrome P450 monooxygenases, 4 NAD(+)-dependent oxidoreductases, one flavin-dependent oxidoreductase, and one O-methyltransferase. The cytochrome P450 monooxygenases may be involved in protoilludene hydroxylation to elaborate melleolides with multiple alcohol groups, such as melleolide D, which carries alcohol functionalities at C-4, C-5, C-10, and C-13. The role of the NAD(+)-dependent enzymes remains unknown. Numerous melleolides, including arnamial, show 5'-O-methylation of the aromatic moiety which may be catalyzed by the methyltransferase encoded in the cluster. The flavin-dependent oxidoreductase might represent the dehydrogenase yielding the aldehyde in position 1 of arnamial and other melleolides. Finally, several halogenase localized outside of the cluster, are able to catalyze the transfer of a single chlorine atom to the melleolide backbone, resulting in a 6'-chloromelleolide product. The chain is Short-chain dehydrogenase/reductase ARMGADRAFT_1018421 from Armillaria gallica (Bulbous honey fungus).